A 416-amino-acid chain; its full sequence is Probable glucan 1,3-beta-glucosidase A (416 aa).

The signal sequence occupies residues 1-22 (MFVESAKKALLALSLLAASAQA). N-linked (GlcNAc...) asparagine glycosylation is present at asparagine 183. The Proton donor role is filled by glutamate 210. 2 disulfide bridges follow: cysteine 290–cysteine 415 and cysteine 316–cysteine 342. Glutamate 308 functions as the Nucleophile in the catalytic mechanism.

It belongs to the glycosyl hydrolase 5 (cellulase A) family. Monomer. Requires Mn(2+) as cofactor.

The protein resides in the secreted. It catalyses the reaction Successive hydrolysis of beta-D-glucose units from the non-reducing ends of (1-&gt;3)-beta-D-glucans, releasing alpha-glucose.. Beta-glucanases participate in the metabolism of beta-glucan, the main structural component of the cell wall. It could also function biosynthetically as a transglycosylase. This is Probable glucan 1,3-beta-glucosidase A (exgA) from Aspergillus niger (strain ATCC MYA-4892 / CBS 513.88 / FGSC A1513).